The sequence spans 155 residues: Ribosomal RNA large subunit methyltransferase H (155 aa).

S-adenosyl-L-methionine-binding positions include Leu-72, Gly-104, and 123–128 (LSRMTF).

This sequence belongs to the RNA methyltransferase RlmH family. In terms of assembly, homodimer.

The protein localises to the cytoplasm. The enzyme catalyses pseudouridine(1915) in 23S rRNA + S-adenosyl-L-methionine = N(3)-methylpseudouridine(1915) in 23S rRNA + S-adenosyl-L-homocysteine + H(+). Its function is as follows. Specifically methylates the pseudouridine at position 1915 (m3Psi1915) in 23S rRNA. In Kosmotoga olearia (strain ATCC BAA-1733 / DSM 21960 / TBF 19.5.1), this protein is Ribosomal RNA large subunit methyltransferase H.